The primary structure comprises 350 residues: Twinfilin-1 (350 aa).

ADF-H domains lie at glutamine 4 to alanine 139 and glycine 177 to histidine 313. Residues glutamine 316–aspartate 350 are disordered.

The protein belongs to the actin-binding proteins ADF family. Twinfilin subfamily. Interacts with G-actin; ADP-actin form.

Its subcellular location is the cytoplasm. It is found in the cytoskeleton. Functionally, actin-binding protein involved in motile and morphological processes. Inhibits actin polymerization, likely by sequestering G-actin. This Xenopus tropicalis (Western clawed frog) protein is Twinfilin-1 (twf1).